The chain runs to 248 residues: 4-hydroxy-tetrahydrodipicolinate reductase (248 aa).

Residue 13 to 18 participates in NAD(+) binding; the sequence is GITGRL. Position 36 (Arg36) interacts with NADP(+). NAD(+)-binding positions include 84–86 and 108–111; these read GTT and AANF. His140 serves as the catalytic Proton donor/acceptor. Residue His141 coordinates (S)-2,3,4,5-tetrahydrodipicolinate. Lys144 serves as the catalytic Proton donor. 150 to 151 serves as a coordination point for (S)-2,3,4,5-tetrahydrodipicolinate; sequence GT.

Belongs to the DapB family.

The protein localises to the cytoplasm. The catalysed reaction is (S)-2,3,4,5-tetrahydrodipicolinate + NAD(+) + H2O = (2S,4S)-4-hydroxy-2,3,4,5-tetrahydrodipicolinate + NADH + H(+). The enzyme catalyses (S)-2,3,4,5-tetrahydrodipicolinate + NADP(+) + H2O = (2S,4S)-4-hydroxy-2,3,4,5-tetrahydrodipicolinate + NADPH + H(+). Its pathway is amino-acid biosynthesis; L-lysine biosynthesis via DAP pathway; (S)-tetrahydrodipicolinate from L-aspartate: step 4/4. Catalyzes the conversion of 4-hydroxy-tetrahydrodipicolinate (HTPA) to tetrahydrodipicolinate. The chain is 4-hydroxy-tetrahydrodipicolinate reductase from Gluconobacter oxydans (strain 621H) (Gluconobacter suboxydans).